The primary structure comprises 400 residues: EARP-interacting protein homolog (400 aa).

The tract at residues 95-114 (NNNSNNTNNNDNTNNNTNNN) is disordered. Over residues 96–114 (NNSNNTNNNDNTNNNTNNN) the composition is skewed to low complexity. WD repeat units lie at residues 138-178 (GHTG…NEPT), 227-267 (AHSE…DPVK), and 271-311 (GHNH…SAFN). Over residues 314 to 333 (NNISNSNEQQHSQQPNEQQP) the composition is skewed to low complexity. Positions 314 to 348 (NNISNSNEQQHSQQPNEQQPQQPPQPVKQKKNKRN) are disordered. Residues 358 to 397 (EHEDSVYNISWSSSNFLFASLSYDGRFVVNNVPKEYSDIL) form a WD 4 repeat.

The protein belongs to the WD repeat EIPR1 family.

In Dictyostelium discoideum (Social amoeba), this protein is EARP-interacting protein homolog.